The chain runs to 378 residues: Ribosomal RNA large subunit methyltransferase G (378 aa).

This sequence belongs to the methyltransferase superfamily. RlmG family.

The protein localises to the cytoplasm. The enzyme catalyses guanosine(1835) in 23S rRNA + S-adenosyl-L-methionine = N(2)-methylguanosine(1835) in 23S rRNA + S-adenosyl-L-homocysteine + H(+). Specifically methylates the guanine in position 1835 (m2G1835) of 23S rRNA. In Escherichia coli O1:K1 / APEC, this protein is Ribosomal RNA large subunit methyltransferase G.